The following is a 148-amino-acid chain: Caltractin (148 aa).

EF-hand domains are found at residues Glu-4–Glu-39, Pro-40–Glu-75, Asp-77–Asn-112, and Met-113–Phe-148. The Ca(2+) site is built by Asp-17, Asp-19, Ser-21, Thr-23, Glu-28, Asp-53, Asp-55, Ser-57, Thr-59, and Glu-64. Positions 126, 128, 130, 132, and 137 each coordinate Ca(2+).

The protein belongs to the centrin family. In terms of tissue distribution, ubiquitous.

This calcium-binding protein is found in the basal body complexes (the functional homolog of the centrosome in animal cell). In mitotic cells it is specifically associated with the poles of the mitotic spindles at the sites of the duplicated basal body complexes. This is Caltractin from Tetraselmis striata (Green microalga).